Here is a 354-residue protein sequence, read N- to C-terminus: Cysteine proteinase A (354 aa).

The N-terminal stretch at 1–24 is a signal peptide; it reads MARRNPLLFAIVVTILFVVCYGSA. A propeptide spans 25-125 (activation peptide); it reads LIAQTPPPVD…HKEDVHVDDS (101 aa). Cystine bridges form between Cys150-Cys191, Cys184-Cys229, and Cys282-Cys330. Residue Cys153 is part of the active site. The N-linked (GlcNAc...) asparagine glycan is linked to Asn208. Catalysis depends on residues His289 and Asn309.

It belongs to the peptidase C1 family.

The sequence is that of Cysteine proteinase A (LMCPA) from Leishmania mexicana.